A 621-amino-acid polypeptide reads, in one-letter code: MAERDLAVAILAAGKGTRMRSQLPKVLHKLGSLSLIERLLRTVLTLKPQRCLVIVGYEQEQVRRALQEYPVEFVEQAQQLGTGHAVQQLLPVLENFQGDLLVVNGDVPLLRAETLQALLERHRQVQPDVTLLSAQVADPYGYGRVFCDAQQRILELVEERDCTPAQRQNRRINSGVYCFHWPALARVLPRLGRNNAQQEYYLTEAVKLLDTAIALDAEDAREIVGINDRRQLAQAYQILQDRLKEAWMEAGVTFVDPDSVSLEETVELAPDVVIEPQTHLRGVCRIGPRTRLGPGSWIESSTIGSDCHILYSVVSHSQIGDRVWVGPYAHVRPHSQIGDGCRIGNFVEIKNAQIGSHTNAAHLAYLGDAKLGSQVNIGAGTIIANYDGQQKHFTEIGDRSKTGANSVLVAPLKIGSDVTIAAGSTIPARYPVPDDCLVIARAYPVVKPGWRPGSAAAGRPQPLPTGSLRVYPLRLLPGQDLKQELERFARQQPLQAGFVLSAVGSLSQATLRLADQTEDYLLSERLEILALSGSLCPDGVHLHLAVADAQGRTWGGHLRPGCLIYTTAEIVLADSLEYRFSRQPDPATGYLELHIEKVAEATPPSPQRADGTGVGIPSCPP.

A pyrophosphorylase region spans residues 1–229 (MAERDLAVAI…AREIVGINDR (229 aa)). UDP-N-acetyl-alpha-D-glucosamine is bound by residues 11–14 (LAAG), Lys25, Gln76, and 81–82 (GT). Asp106 contacts Mg(2+). UDP-N-acetyl-alpha-D-glucosamine contacts are provided by Gly143, Glu158, Asn173, and Asn227. Asn227 is a Mg(2+) binding site. Positions 230–250 (RQLAQAYQILQDRLKEAWMEA) are linker. The N-acetyltransferase stretch occupies residues 251–621 (GVTFVDPDSV…TGVGIPSCPP (371 aa)). UDP-N-acetyl-alpha-D-glucosamine-binding residues include Arg332 and Lys350. His362 functions as the Proton acceptor in the catalytic mechanism. UDP-N-acetyl-alpha-D-glucosamine is bound by residues Tyr365 and Asn376. Residues Ala379, 385 to 386 (NY), Ala422, and Arg441 contribute to the acetyl-CoA site. Positions 601-621 (ATPPSPQRADGTGVGIPSCPP) are disordered.

It in the N-terminal section; belongs to the N-acetylglucosamine-1-phosphate uridyltransferase family. In the C-terminal section; belongs to the transferase hexapeptide repeat family. Homotrimer. Mg(2+) serves as cofactor.

It is found in the cytoplasm. The catalysed reaction is alpha-D-glucosamine 1-phosphate + acetyl-CoA = N-acetyl-alpha-D-glucosamine 1-phosphate + CoA + H(+). The enzyme catalyses N-acetyl-alpha-D-glucosamine 1-phosphate + UTP + H(+) = UDP-N-acetyl-alpha-D-glucosamine + diphosphate. The protein operates within nucleotide-sugar biosynthesis; UDP-N-acetyl-alpha-D-glucosamine biosynthesis; N-acetyl-alpha-D-glucosamine 1-phosphate from alpha-D-glucosamine 6-phosphate (route II): step 2/2. It functions in the pathway nucleotide-sugar biosynthesis; UDP-N-acetyl-alpha-D-glucosamine biosynthesis; UDP-N-acetyl-alpha-D-glucosamine from N-acetyl-alpha-D-glucosamine 1-phosphate: step 1/1. Its pathway is bacterial outer membrane biogenesis; LPS lipid A biosynthesis. Its function is as follows. Catalyzes the last two sequential reactions in the de novo biosynthetic pathway for UDP-N-acetylglucosamine (UDP-GlcNAc). The C-terminal domain catalyzes the transfer of acetyl group from acetyl coenzyme A to glucosamine-1-phosphate (GlcN-1-P) to produce N-acetylglucosamine-1-phosphate (GlcNAc-1-P), which is converted into UDP-GlcNAc by the transfer of uridine 5-monophosphate (from uridine 5-triphosphate), a reaction catalyzed by the N-terminal domain. This is Bifunctional protein GlmU from Synechococcus sp. (strain JA-3-3Ab) (Cyanobacteria bacterium Yellowstone A-Prime).